Here is a 116-residue protein sequence, read N- to C-terminus: Ribonuclease P protein component (116 aa).

It belongs to the RnpA family. Consists of a catalytic RNA component (M1 or rnpB) and a protein subunit.

It carries out the reaction Endonucleolytic cleavage of RNA, removing 5'-extranucleotides from tRNA precursor.. Its function is as follows. RNaseP catalyzes the removal of the 5'-leader sequence from pre-tRNA to produce the mature 5'-terminus. It can also cleave other RNA substrates such as 4.5S RNA. The protein component plays an auxiliary but essential role in vivo by binding to the 5'-leader sequence and broadening the substrate specificity of the ribozyme. In Citrifermentans bemidjiense (strain ATCC BAA-1014 / DSM 16622 / JCM 12645 / Bem) (Geobacter bemidjiensis), this protein is Ribonuclease P protein component.